Consider the following 350-residue polypeptide: MNSTRNIISLVRRYSTSRSVKIASHGSPSTALKIENENITDKISNKDVLVEMLHAPINPADLNIIQGTYGTNVQVGGVAGMEGVGVVKKVGSGVTGLKENDLVVPSMKQHFGSWRSKGVWSEQQLFKVPSDIPTEYLSTISINPTTAYLLLNDFVKLQQGDVIIQNASNSMVGLSVIQLAKARGIKTINVIRDGSEFEDNVQRLKQLGGDIVVSEEYVRTPAFRKLISDLPSPKLALNAVGGQSATELSRILADNGTLVTYGGMSREPVTIPTSQLIFRNIQIRGFWLNKWFEQHTDSEKQSVYDAIFDLIRKKQFKLLIEKHKFSEFDQALLKSQQSGHGRKIVLDLQL.

The N-terminal 14 residues, 1 to 14 (MNSTRNIISLVRRY), are a transit peptide targeting the mitochondrion. Tyr-69 functions as the Proton donor in the catalytic mechanism. NADP(+) is bound by residues Asn-143, 169-172 (NSMV), 192-194 (RDG), 261-264 (YGGM), 286-288 (FWL), and Lys-343.

Belongs to the zinc-containing alcohol dehydrogenase family. Quinone oxidoreductase subfamily. In terms of assembly, homodimer.

It localises to the mitochondrion. The enzyme catalyses a 2,3-saturated acyl-[ACP] + NADP(+) = a (2E)-enoyl-[ACP] + NADPH + H(+). In terms of biological role, catalyzes the NADPH-dependent reduction of trans-2-enoyl thioesters in mitochondrial fatty acid synthesis (fatty acid synthesis type II). Fatty acid chain elongation in mitochondria uses acyl carrier protein (ACP) as an acyl group carrier, but the enzyme accepts both ACP and CoA thioesters as substrates in vitro. This is Enoyl-[acyl-carrier-protein] reductase, mitochondrial (mecr) from Dictyostelium discoideum (Social amoeba).